We begin with the raw amino-acid sequence, 281 residues long: Aminoglycoside N(3)-acetyltransferase IX (281 aa).

Belongs to the antibiotic N-acetyltransferase family.

It carries out the reaction a 2-deoxystreptamine antibiotic + acetyl-CoA = an N(3)-acetyl-2-deoxystreptamine antibiotic + CoA + H(+). Its function is as follows. Resistance to neomycin. The chain is Aminoglycoside N(3)-acetyltransferase IX (aacC9) from Micromonospora chalcea.